The sequence spans 447 residues: Phosphoglucosamine mutase (447 aa).

Residue Ser-101 is the Phosphoserine intermediate of the active site. Ser-101, Asp-242, Asp-244, and Asp-246 together coordinate Mg(2+). A Phosphoserine modification is found at Ser-101.

This sequence belongs to the phosphohexose mutase family. Mg(2+) serves as cofactor. Post-translationally, activated by phosphorylation.

It carries out the reaction alpha-D-glucosamine 1-phosphate = D-glucosamine 6-phosphate. Its function is as follows. Catalyzes the conversion of glucosamine-6-phosphate to glucosamine-1-phosphate. The sequence is that of Phosphoglucosamine mutase from Bradyrhizobium diazoefficiens (strain JCM 10833 / BCRC 13528 / IAM 13628 / NBRC 14792 / USDA 110).